A 277-amino-acid polypeptide reads, in one-letter code: S-formylglutathione hydrolase FrmB (277 aa).

Catalysis depends on charge relay system residues Ser-145, Asp-221, and His-254.

The protein belongs to the esterase D family.

The enzyme catalyses S-formylglutathione + H2O = formate + glutathione + H(+). Functionally, serine hydrolase involved in the detoxification of formaldehyde. Hydrolyzes S-formylglutathione to glutathione and formate. This is S-formylglutathione hydrolase FrmB (frmB) from Escherichia coli (strain ATCC 8739 / DSM 1576 / NBRC 3972 / NCIMB 8545 / WDCM 00012 / Crooks).